The following is a 439-amino-acid chain: GTPase Obg (439 aa).

Positions 4–162 (IEFIDVVDIY…KHIQLELKLL (159 aa)) constitute an Obg domain. Positions 163-336 (ADVGLIGYPN…LKYAMWDIIK (174 aa)) constitute an OBG-type G domain. Residues 169–176 (GYPNVGKS), 194–198 (FTTLV), 218–221 (DIPG), 288–291 (NKSD), and 317–319 (SAV) contribute to the GTP site. Mg(2+) contacts are provided by serine 176 and threonine 196. The OCT domain occupies 361–439 (LVLPDRVDIK…VEGVDFIFKE (79 aa)).

This sequence belongs to the TRAFAC class OBG-HflX-like GTPase superfamily. OBG GTPase family. Monomer. Mg(2+) serves as cofactor.

Its subcellular location is the cytoplasm. In terms of biological role, an essential GTPase which binds GTP, GDP and possibly (p)ppGpp with moderate affinity, with high nucleotide exchange rates and a fairly low GTP hydrolysis rate. Plays a role in control of the cell cycle, stress response, ribosome biogenesis and in those bacteria that undergo differentiation, in morphogenesis control. The polypeptide is GTPase Obg (Fervidobacterium nodosum (strain ATCC 35602 / DSM 5306 / Rt17-B1)).